We begin with the raw amino-acid sequence, 436 residues long: Anaerobic glycerol-3-phosphate dehydrogenase subunit B (436 aa).

It belongs to the anaerobic G-3-P dehydrogenase subunit B family. In terms of assembly, composed of a catalytic GlpA/B dimer and of membrane bound GlpC. FMN is required as a cofactor.

The catalysed reaction is a quinone + sn-glycerol 3-phosphate = dihydroxyacetone phosphate + a quinol. Its pathway is polyol metabolism; glycerol degradation via glycerol kinase pathway; glycerone phosphate from sn-glycerol 3-phosphate (anaerobic route): step 1/1. Functionally, conversion of glycerol 3-phosphate to dihydroxyacetone. Uses fumarate or nitrate as electron acceptor. The polypeptide is Anaerobic glycerol-3-phosphate dehydrogenase subunit B (Vibrio cholerae serotype O1 (strain ATCC 39315 / El Tor Inaba N16961)).